We begin with the raw amino-acid sequence, 613 residues long: Zinc finger CCCH domain-containing protein 59 (613 aa).

The tract at residues 275–296 (NTTLSPYISPAKSVPVEETPKR) is disordered. 2 consecutive C3H1-type zinc fingers follow at residues 318–346 (AGGN…HDEE) and 350–378 (HYNR…HSLS).

This chain is Zinc finger CCCH domain-containing protein 59, found in Oryza sativa subsp. japonica (Rice).